The chain runs to 515 residues: Maturase K (515 aa).

This sequence belongs to the intron maturase 2 family. MatK subfamily.

It is found in the plastid. Its subcellular location is the chloroplast. Its function is as follows. Usually encoded in the trnK tRNA gene intron. Probably assists in splicing its own and other chloroplast group II introns. This chain is Maturase K, found in Picea sitchensis (Sitka spruce).